The chain runs to 468 residues: tRNA threonylcarbamoyladenosine dehydratase (468 aa).

A run of 3 helical transmembrane segments spans residues 15–35 (FWIAVSSSVTTACVILGTLEF), 109–129 (NSFVIVVGCGGVGSWVINMLA), and 315–335 (ILPVIGPMPGIFGLTIATYVL).

The protein belongs to the HesA/MoeB/ThiF family.

The protein resides in the mitochondrion outer membrane. Functionally, catalyzes the ATP-dependent dehydration of threonylcarbamoyladenosine at position 37 (t(6)A37) to form cyclic t(6)A37 (ct(6)A37) in tRNAs that read codons beginning with adenine. The chain is tRNA threonylcarbamoyladenosine dehydratase (tcd1) from Schizosaccharomyces pombe (strain 972 / ATCC 24843) (Fission yeast).